Reading from the N-terminus, the 368-residue chain is Propane 2-monooxygenase, hydroxylase component small subunit (368 aa).

This sequence belongs to the TmoE/XamoE family. In terms of assembly, the propane 2-monooxygenase multicomponent enzyme system is composed of an electron transfer component and a monooxygenase component interacting with the effector protein PrmD. The electron transfer component is composed of a reductase (PrmB), and the monooxygenase component is formed by a large subunit (PrmA) and a small subunit (PrmC). Probably requires the presence of the chaperonin-like protein PrmG to ensure a productive folding, resulting of a soluble PrmC, which leads to the active form of PrmABCD.

The catalysed reaction is propane + NADH + O2 + H(+) = propan-2-ol + NAD(+) + H2O. In terms of biological role, component of the propane 2-monooxygenase multicomponent enzyme system which is involved in the degradation of propane via the O2-dependent hydroxylation of propane. Also able to catalyze the oxidation the water contaminant N-nitrosodimethylamine (NDMA). This is Propane 2-monooxygenase, hydroxylase component small subunit from Rhodococcus jostii (strain RHA1).